The following is a 576-amino-acid chain: Putative export ATP-binding/permease protein RF_0214 (576 aa).

The ABC transmembrane type-1 domain maps to 20-303 (LIIVMISLLS…IFELLSEIHL (284 aa)). 6 helical membrane-spanning segments follow: residues 21 to 41 (IIVMISLLSVSASLLLIGSVF), 61 to 81 (ILYICLLIIILSIASFFRSYF), 135 to 155 (FLSFFIRNSVMLIGGVTLMFF), 158 to 178 (FKLASIVIITIPILLIPLIKF), 242 to 262 (ALFFAISIAIIFLAITLVVWI), and 277 to 297 (IISFIYYAIIAGFSSGGIFEL). The region spanning 336–572 (IEFKNVDFTY…SEIYRNICRE (237 aa)) is the ABC transporter domain. 371 to 378 (GRSGGGKS) serves as a coordination point for ATP.

Belongs to the ABC transporter superfamily. Homodimer.

The protein resides in the cell inner membrane. In terms of biological role, part of an ABC transporter complex. Transmembrane domains (TMD) form a pore in the inner membrane and the ATP-binding domain (NBD) is responsible for energy generation. The polypeptide is Putative export ATP-binding/permease protein RF_0214 (Rickettsia felis (strain ATCC VR-1525 / URRWXCal2) (Rickettsia azadi)).